Here is a 370-residue protein sequence, read N- to C-terminus: DNA replication and repair protein RecF (370 aa).

30–37 serves as a coordination point for ATP; it reads GENAQGKT.

Belongs to the RecF family.

It localises to the cytoplasm. Its function is as follows. The RecF protein is involved in DNA metabolism; it is required for DNA replication and normal SOS inducibility. RecF binds preferentially to single-stranded, linear DNA. It also seems to bind ATP. This chain is DNA replication and repair protein RecF, found in Listeria innocua serovar 6a (strain ATCC BAA-680 / CLIP 11262).